The primary structure comprises 297 residues: Homoserine kinase (297 aa).

82 to 92 (PLTRGLGSSAS) is an ATP binding site.

This sequence belongs to the GHMP kinase family. Homoserine kinase subfamily.

Its subcellular location is the cytoplasm. It carries out the reaction L-homoserine + ATP = O-phospho-L-homoserine + ADP + H(+). Its pathway is amino-acid biosynthesis; L-threonine biosynthesis; L-threonine from L-aspartate: step 4/5. Functionally, catalyzes the ATP-dependent phosphorylation of L-homoserine to L-homoserine phosphate. This chain is Homoserine kinase, found in Bacillus cereus (strain G9842).